The sequence spans 365 residues: Phosphoserine aminotransferase (365 aa).

Arg-40 provides a ligand contact to L-glutamate. Residues 74-75 (AS), Phe-99, Thr-155, Asp-177, and Gln-200 each bind pyridoxal 5'-phosphate. Lys-201 is subject to N6-(pyridoxal phosphate)lysine. 241–242 (NT) is a binding site for pyridoxal 5'-phosphate.

It belongs to the class-V pyridoxal-phosphate-dependent aminotransferase family. SerC subfamily. In terms of assembly, homodimer. Requires pyridoxal 5'-phosphate as cofactor.

The protein resides in the cytoplasm. It catalyses the reaction O-phospho-L-serine + 2-oxoglutarate = 3-phosphooxypyruvate + L-glutamate. The enzyme catalyses 4-(phosphooxy)-L-threonine + 2-oxoglutarate = (R)-3-hydroxy-2-oxo-4-phosphooxybutanoate + L-glutamate. Its pathway is amino-acid biosynthesis; L-serine biosynthesis; L-serine from 3-phospho-D-glycerate: step 2/3. Functionally, catalyzes the reversible conversion of 3-phosphohydroxypyruvate to phosphoserine and of 3-hydroxy-2-oxo-4-phosphonooxybutanoate to phosphohydroxythreonine. This Lactococcus lactis subsp. cremoris (strain MG1363) protein is Phosphoserine aminotransferase.